The sequence spans 102 residues: Acid shock protein (102 aa).

The signal sequence occupies residues 1-21; it reads MKKVLALVVAAAMGLSSAAFA. Low complexity predominate over residues 22–41; it reads AETATTPAPTATTTKAAPAK. Positions 22-58 are excised as a propeptide; it reads AETATTPAPTATTTKAAPAKTTHHKKQHKAAPAQKAQ. Residues 22 to 102 are disordered; it reads AETATTPAPT…PAKPAAQPAA (81 aa). Positions 80 to 90 are enriched in basic residues; the sequence is AAKKHAGKHGH. A compositionally biased stretch (low complexity) spans 91 to 102; sequence QQPAKPAAQPAA.

The protein belongs to the Asr family. In terms of processing, proteolytic processing gives rise to the active protein.

It is found in the periplasm. Its function is as follows. Required for growth and/or survival at acidic conditions. The sequence is that of Acid shock protein from Shigella flexneri.